The primary structure comprises 121 residues: Large ribosomal subunit protein uL18 (121 aa).

Belongs to the universal ribosomal protein uL18 family. Part of the 50S ribosomal subunit; part of the 5S rRNA/L5/L18/L25 subcomplex. Contacts the 5S and 23S rRNAs.

Functionally, this is one of the proteins that bind and probably mediate the attachment of the 5S RNA into the large ribosomal subunit, where it forms part of the central protuberance. The protein is Large ribosomal subunit protein uL18 of Paraburkholderia phytofirmans (strain DSM 17436 / LMG 22146 / PsJN) (Burkholderia phytofirmans).